A 441-amino-acid chain; its full sequence is Tol-Pal system protein TolB (441 aa).

The first 39 residues, 1–39 (MPAMTPAFRRADLTGFLRTYGAALILLLAAMLAWQPAQA), serve as a signal peptide directing secretion.

It belongs to the TolB family. As to quaternary structure, the Tol-Pal system is composed of five core proteins: the inner membrane proteins TolA, TolQ and TolR, the periplasmic protein TolB and the outer membrane protein Pal. They form a network linking the inner and outer membranes and the peptidoglycan layer.

The protein resides in the periplasm. Functionally, part of the Tol-Pal system, which plays a role in outer membrane invagination during cell division and is important for maintaining outer membrane integrity. The chain is Tol-Pal system protein TolB from Bordetella bronchiseptica (strain ATCC BAA-588 / NCTC 13252 / RB50) (Alcaligenes bronchisepticus).